A 205-amino-acid chain; its full sequence is N-(5'-phosphoribosyl)anthranilate isomerase (205 aa).

The protein belongs to the TrpF family.

It carries out the reaction N-(5-phospho-beta-D-ribosyl)anthranilate = 1-(2-carboxyphenylamino)-1-deoxy-D-ribulose 5-phosphate. It participates in amino-acid biosynthesis; L-tryptophan biosynthesis; L-tryptophan from chorismate: step 3/5. The chain is N-(5'-phosphoribosyl)anthranilate isomerase from Marinomonas sp. (strain MWYL1).